The primary structure comprises 437 residues: MSAPRVSFVSLGCPKALVDSERIITGLRSEGYEISRKHDGADLVIVNTCGFLDSARDESLEAIGLALNENGKVIVTGCLGAEPDVIRERHPNVLAITGPQAYESVMNAVHEVAPPAHDPFVDLVPPQGVKLTPRHYAYLKISEGCSNRCSFCIIPALRGDLVSRPINEVLREAEKLVQAGVKEILVISQDTSAYGLDIKYQEAMWQDRTVRTKFLDLSRELGEMGVWVRMHYVYPYPHVDEVIPLMAEGKILPYLDIPFQHASPAVLKNMRRPAHQEKTSRRIQAWRETCPDLAVRSTFIVGYPGETEEDFQMLLDWLDEAKIERAGCFKYEAVKGAKANDLGLEQVPEEVKEARWHRFMAKQQQISTNLLKKKVGKRLPVIIDEANGTIGKGRTRYDAPEIDGSVHISSRRPLRVGDIVTVKIEASDAYDLHGTAV.

The MTTase N-terminal domain maps to 4 to 114; the sequence is PRVSFVSLGC…VMNAVHEVAP (111 aa). [4Fe-4S] cluster is bound by residues Cys-13, Cys-49, Cys-78, Cys-145, Cys-149, and Cys-152. Positions 131-369 constitute a Radical SAM core domain; the sequence is LTPRHYAYLK…MAKQQQISTN (239 aa). In terms of domain architecture, TRAM spans 372-437; that stretch reads KKKVGKRLPV…DAYDLHGTAV (66 aa).

It belongs to the methylthiotransferase family. RimO subfamily. The cofactor is [4Fe-4S] cluster.

The protein resides in the cytoplasm. The catalysed reaction is L-aspartate(89)-[ribosomal protein uS12]-hydrogen + (sulfur carrier)-SH + AH2 + 2 S-adenosyl-L-methionine = 3-methylsulfanyl-L-aspartate(89)-[ribosomal protein uS12]-hydrogen + (sulfur carrier)-H + 5'-deoxyadenosine + L-methionine + A + S-adenosyl-L-homocysteine + 2 H(+). Catalyzes the methylthiolation of an aspartic acid residue of ribosomal protein uS12. This is Ribosomal protein uS12 methylthiotransferase RimO from Brucella abortus (strain S19).